A 1000-amino-acid polypeptide reads, in one-letter code: Chloride channel protein D (1000 aa).

Low complexity-rich tracts occupy residues 1 to 16 and 38 to 60; these read MSSGNPFDNGNPNDGN and NNNNNNNNNNNNNNNNNNNNSSV. A disordered region spans residues 1–90; the sequence is MSSGNPFDNG…SYDDDGDDEE (90 aa). The Cytoplasmic segment spans residues 1–256; sequence MSSGNPFDNG…LASDHEVLRW (256 aa). Basic and acidic residues predominate over residues 71–80; sequence RIQEEERLTE. 10 consecutive transmembrane segments (helical) span residues 257–277, 290–310, 416–436, 442–462, 493–513, 534–554, 678–698, 710–730, 733–753, and 772–792; these read IVSLFMGIFIGVIAYFSHACV, AVLELDLFLAFLTYFLLNTLL, GAGAGVAAAFSAPLGGTLFSL, FWSIALTWRAFFCCMVATYTM, IIPFLLIGVLGGLGGALFTWI, LEVFLIIGLSTCIQFFLPLFF, LGLWPMFLFCIFYLFFAAYTA, MLVIGASYGRFVGLVVYHILG, VSIDPGIYAVMGAAAFMGGVS, and YLLPLMLTVMTAKWVADALIH. 2 CBS domains span residues 824-881 and 926-984; these read MAKK…ISDV and MNLT…YREL.

It belongs to the chloride channel (TC 2.A.49) family.

The protein resides in the membrane. Voltage-gated chloride channel. Chloride channels may have several functions including the regulation of cell volume, membrane potential stabilization and signal transduction. Required for normal aggregation. The protein is Chloride channel protein D (clcD) of Dictyostelium discoideum (Social amoeba).